The following is a 121-amino-acid chain: Large ribosomal subunit protein bL12 (121 aa).

Belongs to the bacterial ribosomal protein bL12 family. As to quaternary structure, homodimer. Part of the ribosomal stalk of the 50S ribosomal subunit. Forms a multimeric L10(L12)X complex, where L10 forms an elongated spine to which 2 to 4 L12 dimers bind in a sequential fashion. Binds GTP-bound translation factors.

Functionally, forms part of the ribosomal stalk which helps the ribosome interact with GTP-bound translation factors. Is thus essential for accurate translation. In Tremblaya princeps, this protein is Large ribosomal subunit protein bL12.